Consider the following 406-residue polypeptide: Tryptophan 2,3-dioxygenase (406 aa).

Substrate-binding positions include 72–76 (FIITH) and Arg-144. His-328 is a heme binding site. Thr-342 contacts substrate.

It belongs to the tryptophan 2,3-dioxygenase family. In terms of assembly, homotetramer. Dimer of dimers. Heme serves as cofactor.

The catalysed reaction is L-tryptophan + O2 = N-formyl-L-kynurenine. It functions in the pathway amino-acid degradation; L-tryptophan degradation via kynurenine pathway; L-kynurenine from L-tryptophan: step 1/2. Its function is as follows. Heme-dependent dioxygenase that catalyzes the oxidative cleavage of the L-tryptophan (L-Trp) pyrrole ring and converts L-tryptophan to N-formyl-L-kynurenine. Catalyzes the oxidative cleavage of the indole moiety. This is Tryptophan 2,3-dioxygenase from Homo sapiens (Human).